The following is a 422-amino-acid chain: Zinc finger protein Gfi-1 (422 aa).

An SNAG domain region spans residues 1–20 (MPRSFLVKSKKAHSYHQPRS). The tract at residues 1 to 107 (MPRSFLVKSK…SPASEKSVCP (107 aa)) is disordered. S20 is subject to Phosphoserine. A compositionally biased stretch (low complexity) spans 34–47 (APGGADGTSSAGGA). S56 is modified (phosphoserine). Positions 57–72 (PESQLTEAPDRSSASP) are enriched in polar residues. The tract at residues 140–257 (RPCAALDRGA…LLLGGGSYKC (118 aa)) is required for interaction with RELA. C2H2-type zinc fingers lie at residues 255 to 278 (YKCI…RRSH), 284 to 306 (FACE…KAVH), 312 to 334 (FDCK…LLIH), 340 to 362 (YPCQ…TFIH), 368 to 390 (HKCQ…SRKH), and 396 to 419 (FGCD…ETQH).

Interacts with U2AF1L4. Component of RCOR-GFI-KDM1A-HDAC complexes. Interacts directly with RCOR1, KDM1A and HDAC2. Also interacts with HDAC1 and HDAC3. Interacts (via the zinc-finger domain) with ARIH2; the interaction prevents GFI1 ubiquitination and proteasomal degradation. Interacts with PIAS3; the interaction relieves the inhibitory effect of PIAS3 on STAT3-mediated transcriptional activity. Forms a complex with EHMT2 and HDAC1 to promote 'Lys-9' dimethylation of H3 (H3K9Me2) and repress expression of target genes. Interacts directly with EHMT2. Component of the GFI1-AJUBA-HDAC1 repressor complex. Interacts directly with AJUBA (via ITS LIM domains); the interaction results in the HDAC-dependent corepression of a subset of GFI1 target genes and, occurs independently of the SNAG domain. Interacts with SPI1; the interaction inhibits SPI1 transcriptional activity targeted at macrophage-specific genes, repressing macrophage differentiation of myeloid progenitor cells and promoting granulocyte commitment. Interacts with RUNX1T1; the interaction represses HDAC-mediated transcriptional activity. Interacts with RELA; the interaction occurs on liposaccharide (LPS) stimulation and controls RELA DNA binding activity and regulates endotoxin-mediated TOLL-like receptor inflammatory response. Interacts (via the C-terminal zinc fingers) with ZBTB17; the interaction results in the recruitment of GFI1 to the CDKN1A/p21 and CDKNIB promoters and repression of transcription. In terms of processing, ubiquitinated.

It is found in the nucleus. Its function is as follows. Transcription repressor essential for hematopoiesis. Functions in a cell-context and development-specific manner. Binds to 5'-TAAATCAC[AT]GCA-3' in the promoter region of a large number of genes. Component of several complexes, including the EHMT2-GFI1-HDAC1, AJUBA-GFI1-HDAC1 and RCOR-GFI-KDM1A-HDAC complexes, that suppress, via histone deacetylase (HDAC) recruitment, a number of genes implicated in multilineage blood cell development. Regulates neutrophil differentiation, promotes proliferation of lymphoid cells, and is required for granulocyte development. Inhibits SPI1 transcriptional activity at macrophage-specific genes, repressing macrophage differentiation of myeloid progenitor cells and promoting granulocyte commitment. Mediates, together with U2AF1L4, the alternative splicing of CD45 and controls T-cell receptor signaling. Regulates the endotoxin-mediated Toll-like receptor (TLR) inflammatory response by antagonizing RELA. Cooperates with CBFA2T2 to regulate ITGB1-dependent neurite growth. Controls cell-cycle progression by repressing CDKNIA/p21 transcription in response to TGFB1 via recruitment of GFI1 by ZBTB17 to the CDKNIA/p21 and CDKNIB promoters. Required for the maintenance of inner ear hair cells. In addition to its role in transcription, acts as a substrate adapter for PRMT1 in the DNA damage response: facilitates the recognition of TP53BP1 and MRE11 substrates by PRMT1, promoting their methylation and the DNA damage response. The chain is Zinc finger protein Gfi-1 (GFI1) from Canis lupus familiaris (Dog).